The sequence spans 506 residues: ATP-dependent rRNA helicase RRP3 (506 aa).

Disordered regions lie at residues 1–22 (MSGK…KSKE) and 37–88 (NQKK…FESF). Acidic residues predominate over residues 49–69 (SDQEDDPSESEEEEGSDSEDV). The Q motif signature appears at 86 to 114 (ESFSDLDLVPELIEACKNLNFAKPTPIQA). The 173-residue stretch at 117-289 (IPPALQGHDI…RASLTNPVKC (173 aa)) folds into the Helicase ATP-binding domain. Residue 130–137 (AQTGSGKT) participates in ATP binding. Residues 236-239 (DEAD) carry the DEAD box motif. The 149-residue stretch at 312–460 (LKNTYLIYLM…KENVNKDAIL (149 aa)) folds into the Helicase C-terminal domain. Positions 485–506 (IARGKGRRGRMAARDDMDKGER) are disordered. The span at 496–506 (AARDDMDKGER) shows a compositional bias: basic and acidic residues.

The protein belongs to the DEAD box helicase family. DDX47/RRP3 subfamily. As to quaternary structure, interacts with the SSU processome.

It is found in the nucleus. The enzyme catalyses ATP + H2O = ADP + phosphate + H(+). Functionally, ATP-dependent rRNA helicase required for pre-ribosomal RNA processing. Involved in the maturation of the 35S-pre-rRNA and to its cleavage to mature 18S rRNA. This chain is ATP-dependent rRNA helicase RRP3, found in Vanderwaltozyma polyspora (strain ATCC 22028 / DSM 70294 / BCRC 21397 / CBS 2163 / NBRC 10782 / NRRL Y-8283 / UCD 57-17) (Kluyveromyces polysporus).